Consider the following 534-residue polypeptide: Steroid hormone receptor family member cnr14 (534 aa).

Disordered regions lie at residues 30–53 (SGKT…QWSH) and 119–139 (PATS…GHTT). Residues 119–130 (PATSVTSSLSPP) show a composition bias toward low complexity. The nuclear receptor DNA-binding region spans 148–223 (ISFCKVCGDK…SGMSKDSVRQ (76 aa)). 2 consecutive NR C4-type zinc fingers follow at residues 151-171 (CKVC…CEGC) and 187-211 (CLKQ…FKKC). The region spanning 252 to 493 (EVDAVYEAVL…PPLVVEMFQL (242 aa)) is the NR LBD domain. The disordered stretch occupies residues 502–534 (HNNQENQYTPAPEHQSPQPQQPTPNQQQTPVHC). The segment covering 511 to 534 (PAPEHQSPQPQQPTPNQQQTPVHC) has biased composition (low complexity).

Belongs to the nuclear hormone receptor family. NR1 subfamily. Most abundant in embryos.

It localises to the nucleus. In terms of biological role, transcriptional regulator which is involved in the sex determination and X chromosome dosage compensation pathways. Directly binds to five 5'-A(G/C)(G/T)(T/G)C(A/G)-3' sites in the promoter of sex-determining factor xol-1 to negatively regulate its expression and promote hermaphrodite development. Together with fox-1 is involved in making the distinction between one and two X-chromosomes. Plays a role in the fox-1-mediated repression of the functionally active isoform (isoform b) of the sex-determining factor xol-1 gene to promote hermaphrodite development. Plays a role in the association of the dosage compensation complex proteins dpy-27 and sdc-3 with the hermaphrodite X chromosomes. This chain is Steroid hormone receptor family member cnr14, found in Caenorhabditis elegans.